Here is a 238-residue protein sequence, read N- to C-terminus: Thrombin-like enzyme AhV_TL-I (238 aa).

The Peptidase S1 domain occupies 1-229 (IIGGDECNIN…HLDWIENIIA (229 aa)). Cystine bridges form between Cys-7–Cys-141, Cys-28–Cys-44, Cys-76–Cys-236, Cys-120–Cys-190, Cys-152–Cys-169, and Cys-180–Cys-205. The active-site Charge relay system is His-43. N-linked (GlcNAc...) asparagine glycosylation is present at Asn-81. Asp-88 acts as the Charge relay system in catalysis. The active-site Charge relay system is Ser-184.

It belongs to the peptidase S1 family. Snake venom subfamily. Monomer. In terms of processing, N-glycosylated at Asn-81 by a disaccharide composed of two N-acetylglucosamine (NAG). The presence of this N-glycan deforms the enzyme and Removing the carbohydrate moiety increases the esterase activity, but induces a complete loss of contractile response on mouse thoracic aorta. Expressed by the venom gland.

It localises to the secreted. With respect to regulation, inhibited by PMSF, L-cysteine and partially by SBTI and leupeptin. Its function is as follows. Thrombin-like enzyme that shows fibrinogenolytic activity against both the Aalpha (FGA) and Bbeta (FGB) chains of bovine fibrinogen. This enzyme has poor esterolytic activity upon BAEE substrate. It induces mouse thoracic aortic ring contraction with EC(50)=147 nmol/L. It shows vasoconstrictor effects that are independent of the enzymatic activity, but related to the release of calcium ions form the calcium store, potentially through the activation of ryanodine receptors. The chain is Thrombin-like enzyme AhV_TL-I from Gloydius halys (Chinese water mocassin).